The sequence spans 302 residues: Protein FdhE homolog (302 aa).

This sequence belongs to the FdhE family.

The protein resides in the cytoplasm. Its function is as follows. Necessary for formate dehydrogenase activity. In Haemophilus influenzae (strain PittEE), this protein is Protein FdhE homolog.